The sequence spans 193 residues: uncharacterized protein (193 aa).

The disordered stretch occupies residues tyrosine 158–valine 193. Over residues tyrosine 162–lysine 174 the composition is skewed to basic and acidic residues. Positions leucine 177 to valine 193 are enriched in polar residues.

This is an uncharacterized protein from Micromonas pusilla (Picoplanktonic green alga).